A 348-amino-acid chain; its full sequence is Dihydroorotase (348 aa).

Zn(2+) contacts are provided by His-17 and His-19. Residues 19–21 and Asn-45 each bind substrate; that span reads HLR. Zn(2+) contacts are provided by Lys-103, His-140, and His-178. Residue Lys-103 is modified to N6-carboxylysine. Residue His-140 participates in substrate binding. Leu-223 contributes to the substrate binding site. Position 251 (Asp-251) interacts with Zn(2+). Residue Asp-251 is part of the active site. Substrate-binding residues include His-255 and Ala-267.

Belongs to the metallo-dependent hydrolases superfamily. DHOase family. Class II DHOase subfamily. As to quaternary structure, homodimer. Requires Zn(2+) as cofactor.

The enzyme catalyses (S)-dihydroorotate + H2O = N-carbamoyl-L-aspartate + H(+). It functions in the pathway pyrimidine metabolism; UMP biosynthesis via de novo pathway; (S)-dihydroorotate from bicarbonate: step 3/3. In terms of biological role, catalyzes the reversible cyclization of carbamoyl aspartate to dihydroorotate. The polypeptide is Dihydroorotase (Salmonella typhi).